A 709-amino-acid chain; its full sequence is Polyribonucleotide nucleotidyltransferase (709 aa).

Mg(2+)-binding residues include D487 and D493. A KH domain is found at P554–I613. Positions G623–K691 constitute an S1 motif domain.

This sequence belongs to the polyribonucleotide nucleotidyltransferase family. Component of the RNA degradosome, which is a multiprotein complex involved in RNA processing and mRNA degradation. Requires Mg(2+) as cofactor.

The protein resides in the cytoplasm. It catalyses the reaction RNA(n+1) + phosphate = RNA(n) + a ribonucleoside 5'-diphosphate. In terms of biological role, involved in mRNA degradation. Catalyzes the phosphorolysis of single-stranded polyribonucleotides processively in the 3'- to 5'-direction. The polypeptide is Polyribonucleotide nucleotidyltransferase (Aliivibrio fischeri (strain MJ11) (Vibrio fischeri)).